We begin with the raw amino-acid sequence, 306 residues long: Plant-type L-asparaginase (306 aa).

Threonine 176 (nucleophile) is an active-site residue. Substrate contacts are provided by residues 203–206 (RVGD) and 225–228 (TGLG).

This sequence belongs to the Ntn-hydrolase family. As to quaternary structure, heterotetramer of two alpha and two beta chains arranged as a dimer of alpha/beta heterodimers. The uncleaved protein forms homodimers. Autocleaved. Generates the alpha and beta subunits. The N-terminal residue of the beta subunit is thought to be responsible for the nucleophile hydrolase activity. Predominantly produced in the uncleaved form when gene expression is induced at 37 degrees Celsius with 0.5 mM IPTG. When produced at 42 degrees Celsius without adding IPTG, approximately 90% of the protein is found in the cleaved form, while the remaining 10% is observed as uncleaved precursor. Undergoes complete auto-cleavage within 24 hours at 37 degrees Celsius.

It carries out the reaction L-asparagine + H2O = L-aspartate + NH4(+). Its activity is regulated as follows. Undergoes auto-cleavage in a temperature-dependent and glycine-independent manner. Metal ions and EDTA do not have any significant effect on enzyme activity, indicating that activity is metal-independent. Its function is as follows. Catalyzes the hydrolysis of L-asparagine into L-aspartate and ammonia. Also displays D-asparaginase activity, which is about 10% of the L-asparaginase activity. Does not exhibit glutaminase activity. The chain is Plant-type L-asparaginase from Thermococcus kodakarensis (strain ATCC BAA-918 / JCM 12380 / KOD1) (Pyrococcus kodakaraensis (strain KOD1)).